A 364-amino-acid polypeptide reads, in one-letter code: uncharacterized protein (364 aa).

3 consecutive transmembrane segments (helical) span residues 41-61 (NIFT…FFGL), 298-318 (VIYI…ITYM), and 329-349 (LLFY…SIII).

The protein resides in the membrane. This is an uncharacterized protein from Mycoplasma capricolum subsp. capricolum (strain California kid / ATCC 27343 / NCTC 10154).